Reading from the N-terminus, the 484-residue chain is Phospholipase A1-Ialpha2, chloroplastic (484 aa).

Residues 1-63 constitute a chloroplast transit peptide; it reads MALIQNPNMK…LAPVILNSPV (63 aa). Residues 295 to 299 carry the GXSXG motif; sequence GHSMG. Ser297 (acyl-ester intermediate) is an active-site residue. Residues Asp360 and His411 each act as charge relay system in the active site.

It belongs to the AB hydrolase superfamily. Lipase family. As to expression, ubiquitous. Highest expression in flowers and leaves.

The protein resides in the plastid. The protein localises to the chloroplast. It is found in the plastoglobule. It carries out the reaction a 1,2-diacyl-3-O-[alpha-D-galactosyl-(1-&gt;6)-beta-D-galactosyl]-sn-glycerol + H2O = acyl-3-O-[alpha-D-galactosyl-(1-&gt;6)-beta-D-galactosyl]-sn-glycerol + a fatty acid + H(+). The enzyme catalyses a 1,2-diacyl-3-O-(beta-D-galactosyl)-sn-glycerol + H2O = an acyl-3-O-(beta-D-galactosyl)-sn-glycerol + a fatty acid + H(+). Its function is as follows. Acylhydrolase that catalyzes the hydrolysis of phosphatidylcholine at the sn-1 position. Has a strong galactolipase activity toward monogalactosyldiacylglycerol (MGDG) and digalactosyldiacylglycerol (DGDG). Low triacylglycerol (TAG) lipase activity. Plays a role in plant growth and in leaf senescence. This Arabidopsis thaliana (Mouse-ear cress) protein is Phospholipase A1-Ialpha2, chloroplastic.